Consider the following 208-residue polypeptide: Probable nicotinate-nucleotide adenylyltransferase (208 aa).

Belongs to the NadD family.

The catalysed reaction is nicotinate beta-D-ribonucleotide + ATP + H(+) = deamido-NAD(+) + diphosphate. Its pathway is cofactor biosynthesis; NAD(+) biosynthesis; deamido-NAD(+) from nicotinate D-ribonucleotide: step 1/1. Catalyzes the reversible adenylation of nicotinate mononucleotide (NaMN) to nicotinic acid adenine dinucleotide (NaAD). The protein is Probable nicotinate-nucleotide adenylyltransferase of Acidothermus cellulolyticus (strain ATCC 43068 / DSM 8971 / 11B).